Here is a 1336-residue protein sequence, read N- to C-terminus: pre-mRNA 3' end processing protein WDR33 (1336 aa).

N-acetylalanine is present on Ala2. Ser7 is subject to Phosphoserine. Residue Lys46 is modified to N6-acetyllysine. WD repeat units follow at residues Lys117 to Ile156, Ala159 to Phe198, Ala200 to Ile239, Gly242 to Thr283, Ala286 to Gln325, Gly329 to Gly369, and Ala373 to Arg412. Residues Lys526, Lys530, and Lys560 each participate in a glycyl lysine isopeptide (Lys-Gly) (interchain with G-Cter in SUMO2) cross-link. Residues Gln568 to Arg1336 form a disordered region. Positions Gln573–Gly590 are enriched in pro residues. The segment covering Met594–Ser607 has biased composition (polar residues). Low complexity predominate over residues Gln608–His643. The Collagen-like domain occupies Gly618–Pro770. Residues Pro683–Pro695 are compositionally biased toward pro residues. 2 stretches are compositionally biased toward low complexity: residues Gln696 to Pro707 and Gln726 to Gly751. At Arg782 the chain carries Omega-N-methylarginine. Positions Gly854 to Leu869 are enriched in low complexity. Position 915 is an asymmetric dimethylarginine (Arg915). Over residues Pro932–Gly941 the composition is skewed to low complexity. Basic and acidic residues-rich tracts occupy residues Ser971–Pro989 and Gly998–Gly1034. The residue at position 987 (Arg987) is an Omega-N-methylarginine. Omega-N-methylarginine is present on Arg1035. Basic and acidic residues-rich tracts occupy residues Pro1056–Gly1068 and Glu1078–Asp1122. Residues Phe1130–Glu1140 show a composition bias toward acidic residues. Residues Glu1141–Gly1150 are compositionally biased toward basic and acidic residues. Residues Arg1151–Arg1160 are compositionally biased toward basic residues. 2 stretches are compositionally biased toward basic and acidic residues: residues Glu1169–Ser1217 and Ser1242–Gly1259. At Ser1210 the chain carries Phosphoserine. Arg1262 bears the Omega-N-methylarginine mark. Residues Asp1281 to Pro1293 show a composition bias toward basic and acidic residues. Positions Gly1301–Arg1326 are enriched in low complexity. Arg1315 carries the asymmetric dimethylarginine; alternate modification. Arg1315 carries the post-translational modification Omega-N-methylarginine; alternate.

Belongs to the WD repeat WDR33 family. In terms of assembly, component of the cleavage and polyadenylation specificity factor (CPSF) module of the pre-mRNA 3'-end processing complex. Interacts with CPSF3/CPSF73. In terms of tissue distribution, most highly expressed in testis.

It is found in the nucleus. Essential for both cleavage and polyadenylation of pre-mRNA 3' ends. The chain is pre-mRNA 3' end processing protein WDR33 (WDR33) from Homo sapiens (Human).